Reading from the N-terminus, the 252-residue chain is RNA-binding protein 7 (252 aa).

An RRM domain is found at 9-86; the sequence is RTLFVGNLDP…RQLNIKFKTG (78 aa). Composition is skewed to polar residues over residues 88–107 and 119–137; these read SHINQEGKSPANSQNPSPAN and QMGSPSYSPPQHMQRPFSS. Disordered stretches follow at residues 88–137 and 171–252; these read SHIN…PFSS and QLRG…WKHF. Basic and acidic residues-rich tracts occupy residues 211–230 and 237–252; these read ERNRRDGQRGDFYHHDDRSG and PPDRRRDSREGRWKHF.

In terms of assembly, component of the nuclear exosome targeting (NEXT) complex composed of MTREX, ZCCHC8, and RBM7 that directs a subset of non-coding short-lived RNAs for exosomal degradation.

It is found in the nucleus. The protein localises to the nucleoplasm. In terms of biological role, RNA-binding subunit of the trimeric nuclear exosome targeting (NEXT) complex, a complex that functions as an RNA exosome cofactor that directs a subset of non-coding short-lived RNAs for exosomal degradation. NEXT is involved in surveillance and turnover of aberrant transcripts and non-coding RNAs. Binds preferentially polyuridine sequences and associates with newly synthesized RNAs, including pre-mRNAs and short-lived exosome substrates such as promoter upstream transcripts (PROMPTs), enhancer RNAs (eRNAs), and 3'-extended products from small nuclear RNAs (snRNAs). The polypeptide is RNA-binding protein 7 (Danio rerio (Zebrafish)).